We begin with the raw amino-acid sequence, 368 residues long: Probable dual-specificity RNA methyltransferase RlmN (368 aa).

Glu109 acts as the Proton acceptor in catalysis. In terms of domain architecture, Radical SAM core spans 115-355; that stretch reads YPDRVTMCIS…VTIRDTRGQE (241 aa). A disulfide bridge connects residues Cys122 and Cys360. [4Fe-4S] cluster contacts are provided by Cys129, Cys133, and Cys136. Residues 184-185, Ser218, 241-243, and Asn317 contribute to the S-adenosyl-L-methionine site; these read GE and SLH. Cys360 (S-methylcysteine intermediate) is an active-site residue.

Belongs to the radical SAM superfamily. RlmN family. [4Fe-4S] cluster serves as cofactor.

It is found in the cytoplasm. The catalysed reaction is adenosine(2503) in 23S rRNA + 2 reduced [2Fe-2S]-[ferredoxin] + 2 S-adenosyl-L-methionine = 2-methyladenosine(2503) in 23S rRNA + 5'-deoxyadenosine + L-methionine + 2 oxidized [2Fe-2S]-[ferredoxin] + S-adenosyl-L-homocysteine. The enzyme catalyses adenosine(37) in tRNA + 2 reduced [2Fe-2S]-[ferredoxin] + 2 S-adenosyl-L-methionine = 2-methyladenosine(37) in tRNA + 5'-deoxyadenosine + L-methionine + 2 oxidized [2Fe-2S]-[ferredoxin] + S-adenosyl-L-homocysteine. Functionally, specifically methylates position 2 of adenine 2503 in 23S rRNA and position 2 of adenine 37 in tRNAs. The protein is Probable dual-specificity RNA methyltransferase RlmN of Streptomyces coelicolor (strain ATCC BAA-471 / A3(2) / M145).